Here is a 658-residue protein sequence, read N- to C-terminus: Probable transketolase (658 aa).

His-24 provides a ligand contact to substrate. Thiamine diphosphate contacts are provided by residues His-64 and 113 to 115 (GPL). Asp-154 provides a ligand contact to Mg(2+). 2 residues coordinate thiamine diphosphate: Gly-155 and Asn-184. Mg(2+)-binding residues include Asn-184 and Ile-186. Substrate-binding residues include His-259, Arg-354, and Ser-381. His-259 contributes to the thiamine diphosphate binding site. Residue Glu-408 is the Proton donor of the active site. Phe-434 contacts thiamine diphosphate. Substrate contacts are provided by His-458, Asp-466, and Arg-517.

This sequence belongs to the transketolase family. In terms of assembly, homodimer. It depends on Mg(2+) as a cofactor. Requires Ca(2+) as cofactor. The cofactor is Mn(2+). Co(2+) is required as a cofactor. Thiamine diphosphate serves as cofactor.

The enzyme catalyses D-sedoheptulose 7-phosphate + D-glyceraldehyde 3-phosphate = aldehydo-D-ribose 5-phosphate + D-xylulose 5-phosphate. Its function is as follows. Necessary for high-efficiency recombination chromosomal DNA during genetic transformation. Functionally, catalyzes the transfer of a two-carbon ketol group from a ketose donor to an aldose acceptor, via a covalent intermediate with the cofactor thiamine pyrophosphate. This is Probable transketolase (tkt) from Streptococcus pneumoniae serotype 4 (strain ATCC BAA-334 / TIGR4).